The following is a 552-amino-acid chain: Hydroxylamine reductase (552 aa).

Positions 5, 8, 20, and 27 each coordinate [2Fe-2S] cluster. Hybrid [4Fe-2O-2S] cluster contacts are provided by His251, Glu275, Cys319, Cys407, Cys435, Cys460, Glu494, and Lys496. At Cys407 the chain carries Cysteine persulfide.

It belongs to the HCP family. Requires [2Fe-2S] cluster as cofactor. Hybrid [4Fe-2O-2S] cluster serves as cofactor.

The protein localises to the cytoplasm. The catalysed reaction is A + NH4(+) + H2O = hydroxylamine + AH2 + H(+). Catalyzes the reduction of hydroxylamine to form NH(3) and H(2)O. This is Hydroxylamine reductase from Shigella boydii serotype 4 (strain Sb227).